Here is a 159-residue protein sequence, read N- to C-terminus: Ribosomal RNA large subunit methyltransferase H (159 aa).

S-adenosyl-L-methionine-binding positions include L76, G108, and 127-132 (LSDMTF).

Belongs to the RNA methyltransferase RlmH family. As to quaternary structure, homodimer.

It localises to the cytoplasm. The catalysed reaction is pseudouridine(1915) in 23S rRNA + S-adenosyl-L-methionine = N(3)-methylpseudouridine(1915) in 23S rRNA + S-adenosyl-L-homocysteine + H(+). In terms of biological role, specifically methylates the pseudouridine at position 1915 (m3Psi1915) in 23S rRNA. This Acetivibrio thermocellus (strain ATCC 27405 / DSM 1237 / JCM 9322 / NBRC 103400 / NCIMB 10682 / NRRL B-4536 / VPI 7372) (Clostridium thermocellum) protein is Ribosomal RNA large subunit methyltransferase H.